Reading from the N-terminus, the 165-residue chain is UPF0114 protein ESA_00283 (165 aa).

The next 3 helical transmembrane spans lie at 15–35, 53–73, and 136–156; these read LLAP…VKFF, LILL…LVMV, and LMWY…MGYL.

This sequence belongs to the UPF0114 family.

It localises to the cell membrane. This chain is UPF0114 protein ESA_00283, found in Cronobacter sakazakii (strain ATCC BAA-894) (Enterobacter sakazakii).